An 89-amino-acid chain; its full sequence is Small ribosomal subunit protein uS15 (89 aa).

The segment covering 1–18 (MSLDTAEKQKLIENHQVH) has biased composition (basic and acidic residues). Residues 1–23 (MSLDTAEKQKLIENHQVHPTDTG) form a disordered region.

The protein belongs to the universal ribosomal protein uS15 family. In terms of assembly, part of the 30S ribosomal subunit. Forms a bridge to the 50S subunit in the 70S ribosome, contacting the 23S rRNA.

Functionally, one of the primary rRNA binding proteins, it binds directly to 16S rRNA where it helps nucleate assembly of the platform of the 30S subunit by binding and bridging several RNA helices of the 16S rRNA. Its function is as follows. Forms an intersubunit bridge (bridge B4) with the 23S rRNA of the 50S subunit in the ribosome. This Prochlorococcus marinus (strain MIT 9301) protein is Small ribosomal subunit protein uS15.